We begin with the raw amino-acid sequence, 92 residues long: Small ribosomal subunit protein uS19 (92 aa).

It belongs to the universal ribosomal protein uS19 family.

Its function is as follows. Protein S19 forms a complex with S13 that binds strongly to the 16S ribosomal RNA. The polypeptide is Small ribosomal subunit protein uS19 (Xanthobacter autotrophicus (strain ATCC BAA-1158 / Py2)).